The sequence spans 132 residues: Small ribosomal subunit protein uS8c (132 aa).

It belongs to the universal ribosomal protein uS8 family. As to quaternary structure, part of the 30S ribosomal subunit.

Its subcellular location is the plastid. It localises to the chloroplast. In terms of biological role, one of the primary rRNA binding proteins, it binds directly to 16S rRNA central domain where it helps coordinate assembly of the platform of the 30S subunit. This is Small ribosomal subunit protein uS8c (rps8) from Nandina domestica (Heavenly bamboo).